The primary structure comprises 196 residues: GTP cyclohydrolase-2 (196 aa).

49–53 (RVHSE) is a binding site for GTP. Zn(2+) is bound by residues Cys54, Cys65, and Cys67. GTP contacts are provided by residues Gln70, 92–94 (EGR), and Thr114. Asp126 functions as the Proton acceptor in the catalytic mechanism. The active-site Nucleophile is the Arg128. 2 residues coordinate GTP: Thr149 and Lys154.

It belongs to the GTP cyclohydrolase II family. Homodimer. Requires Zn(2+) as cofactor.

The catalysed reaction is GTP + 4 H2O = 2,5-diamino-6-hydroxy-4-(5-phosphoribosylamino)-pyrimidine + formate + 2 phosphate + 3 H(+). It functions in the pathway cofactor biosynthesis; riboflavin biosynthesis; 5-amino-6-(D-ribitylamino)uracil from GTP: step 1/4. Its function is as follows. Catalyzes the conversion of GTP to 2,5-diamino-6-ribosylamino-4(3H)-pyrimidinone 5'-phosphate (DARP), formate and pyrophosphate. This is GTP cyclohydrolase-2 from Enterobacter sp. (strain 638).